Consider the following 123-residue polypeptide: UPF0738 protein BCE33L1094 (123 aa).

This sequence belongs to the UPF0738 family.

The polypeptide is UPF0738 protein BCE33L1094 (Bacillus cereus (strain ZK / E33L)).